A 200-amino-acid polypeptide reads, in one-letter code: Lipid A acyltransferase PagP (200 aa).

The signal sequence occupies residues 1-24; sequence MRLKLTSHTCLFALSSLLVTPAFA. Residues histidine 72, aspartate 115, and serine 116 contribute to the active site.

The protein belongs to the lipid A palmitoyltransferase family. Homodimer.

The protein localises to the cell outer membrane. The catalysed reaction is a lipid A + a 1,2-diacyl-sn-glycero-3-phosphocholine = a hepta-acyl lipid A + a 2-acyl-sn-glycero-3-phosphocholine. The enzyme catalyses a lipid IVA + a 1,2-diacyl-sn-glycero-3-phosphocholine = a lipid IVB + a 2-acyl-sn-glycero-3-phosphocholine. It catalyses the reaction a lipid IIA + a 1,2-diacyl-sn-glycero-3-phosphocholine = a lipid IIB + a 2-acyl-sn-glycero-3-phosphocholine. Transfers a fatty acid residue from the sn-1 position of a phospholipid to the N-linked hydroxyfatty acid chain on the proximal unit of lipid A or its precursors. This is Lipid A acyltransferase PagP from Dickeya dadantii (strain 3937) (Erwinia chrysanthemi (strain 3937)).